The sequence spans 639 residues: MSQQETHGFQTEVKQLLHLMIHSLYSNKEIFLRELVSNAADAADKLRYEALTNDALYEGDGELRVRISADKEKGTVTIEDNGIGMTRDGVIEHLGTIAKSGTAEFFKNMSGDESKDSQLIGQFGVGFYSSFIVADRVTVRTRAAGHSADEAVLWESAGEGDFTVETITKQSRGTEITLHLRDDEKEFADDYRLRSIITKYSDHISVPVEMYEEGTPAVEATEEGGEAIPATEGHWKLMNKATALWTRNKSDVSDEEYQEFYKYISHDFTDPLLWSHNRVEGKQEYTSLLYIPAKAPWDMWNRDRKHGLKLFVQRVFVMDDAEQFMPSYLRFVQGLIDSNDLPLNVSREILQDNKVTTALRTAVTKRVLGMLEKLAKNDAEKYQSFWTEFGQVLKEGPAEDFANKERVAGLLRFASTHTGEATANVSLADYVERMKEGQSKIYFIVADSYEAAANSPHLELLRKKGIEVLLMSERIDEWLINHLTEFDGKKLHSVTRGDLELGELEDASEKEAQEKLETESEGLVKRVKDSLGDKVSAVKVTTRLTDTPACVVAGEGEMSTQMIKLMQAAGQDVPESKPTFELNPEHPLVARLNDEQDEQRFAQWSELLLQQALLSEKGSLADPSAFIKLMNQMLLASVK.

The segment at 1–347 (MSQQETHGFQ…SNDLPLNVSR (347 aa)) is a; substrate-binding. The b stretch occupies residues 348 to 564 (EILQDNKVTT…EGEMSTQMIK (217 aa)). A c region spans residues 565–639 (LMQAAGQDVP…MNQMLLASVK (75 aa)).

This sequence belongs to the heat shock protein 90 family. In terms of assembly, homodimer.

The protein localises to the cytoplasm. In terms of biological role, molecular chaperone. Has ATPase activity. The sequence is that of Chaperone protein HtpG from Shewanella halifaxensis (strain HAW-EB4).